The sequence spans 268 residues: uncharacterized protein (268 aa).

One can recognise an HTH iclR-type domain in the interval 15 to 77 (NQALIRGLRL…NAAGSYRLTI (63 aa)). The H-T-H motif DNA-binding region spans 37–56 (LAKLAELANLNKSTAHRLLQ). Residues 92–265 (IIHVASPYLE…AEQISLELGY (174 aa)) enclose the IclR-ED domain.

This is an uncharacterized protein from Haemophilus influenzae (strain ATCC 51907 / DSM 11121 / KW20 / Rd).